Reading from the N-terminus, the 1220-residue chain is DNA-directed RNA polymerase subunit beta' (1220 aa).

Zn(2+)-binding residues include cysteine 61, cysteine 63, cysteine 76, and cysteine 79. Positions 450, 452, and 454 each coordinate Mg(2+). The segment at 1197–1220 is disordered; that stretch reads QPESESEEASDIPKLDDVAKTFDN. Residues 1207-1220 are compositionally biased toward basic and acidic residues; it reads DIPKLDDVAKTFDN.

Belongs to the RNA polymerase beta' chain family. In terms of assembly, the RNAP catalytic core consists of 2 alpha, 1 beta, 1 beta' and 1 omega subunit. When a sigma factor is associated with the core the holoenzyme is formed, which can initiate transcription. Mg(2+) serves as cofactor. It depends on Zn(2+) as a cofactor.

The catalysed reaction is RNA(n) + a ribonucleoside 5'-triphosphate = RNA(n+1) + diphosphate. DNA-dependent RNA polymerase catalyzes the transcription of DNA into RNA using the four ribonucleoside triphosphates as substrates. The chain is DNA-directed RNA polymerase subunit beta' from Leuconostoc mesenteroides subsp. mesenteroides (strain ATCC 8293 / DSM 20343 / BCRC 11652 / CCM 1803 / JCM 6124 / NCDO 523 / NBRC 100496 / NCIMB 8023 / NCTC 12954 / NRRL B-1118 / 37Y).